The sequence spans 513 residues: MSDTTLEKIIVLDYGSQYNQLIARRIREIGVFSELMSHKVTAKEIREINPIGIILSGGPNSVYDEGSFDIDPEIFELGLPVLGICYGMQLMSYKLGGMVEAAGEREYGVAPLQLTEKSALFAGTPEVQDVLMSHGDRVTAIPEGFHVVGTSPNSPFAAVENTERNLYGIQFHPEVRHSVHGTEMLRNFALNICGAKGNWSMENFIDMQIKDIREKVGDKKVLLGLSGGVDSSVVGVLLQRAIGDQLTSIFVDHGFLRKGEADQVMETLGGKFGLNIIKVDAQKRFMDKLVGLSDPETKRKIIGNEFVYVFDDEANKLEGVDFLAQGTLYTDVIESGTDTAQTIKSHHNVGGLPEDMQFQLIEPLNTLFKDEVRALGTQLGMPDEIVWRQPFPGPGLAIRVLGDLTEEKLETVRESDAILREEIAASGLERDVWQYFTVNTDVKSVGVMGDQRTYDYTLAIRAITSIDGMTADFAQLPWDLLQKISKRIVNEVDHVNRIVYDITSKPPATVEWQ.

Residues 8 to 198 (KIIVLDYGSQ…ALNICGAKGN (191 aa)) form the Glutamine amidotransferase type-1 domain. The active-site Nucleophile is Cys-85. Active-site residues include His-172 and Glu-174. Positions 199 to 388 (WSMENFIDMQ…LGMPDEIVWR (190 aa)) constitute a GMPS ATP-PPase domain. Residue 226–232 (SGGVDSS) participates in ATP binding.

Homodimer.

It carries out the reaction XMP + L-glutamine + ATP + H2O = GMP + L-glutamate + AMP + diphosphate + 2 H(+). Its pathway is purine metabolism; GMP biosynthesis; GMP from XMP (L-Gln route): step 1/1. In terms of biological role, catalyzes the synthesis of GMP from XMP. This chain is GMP synthase [glutamine-hydrolyzing] (guaA), found in Lactococcus lactis subsp. cremoris (strain MG1363).